The chain runs to 350 residues: Fe(3+) ions import ATP-binding protein FbpC (350 aa).

Residues 4 to 236 (LDIINLSKSF…PNDEQTAHFL (233 aa)) enclose the ABC transporter domain. 36–43 (GPSGSGKT) is an ATP binding site.

The protein belongs to the ABC transporter superfamily. Fe(3+) ion importer (TC 3.A.1.10) family. The complex is composed of two ATP-binding proteins (FbpC), two transmembrane proteins (FbpB) and a solute-binding protein (FbpA).

Its subcellular location is the cell inner membrane. The enzyme catalyses Fe(3+)(out) + ATP + H2O = Fe(3+)(in) + ADP + phosphate + H(+). In terms of biological role, part of the ABC transporter complex FbpABC involved in Fe(3+) ions import. Responsible for energy coupling to the transport system. The sequence is that of Fe(3+) ions import ATP-binding protein FbpC from Pseudomonas fluorescens (strain Pf0-1).